A 759-amino-acid chain; its full sequence is Multifunctional tryptophan biosynthesis protein (759 aa).

One can recognise a Glutamine amidotransferase type-1 domain in the interval 27-223 (PIVMIDNYDS…LNLTAGTWEE (197 aa)). 80–82 (GPG) lines the L-glutamine pocket. Catalysis depends on C108, which acts as the Nucleophile; for GATase activity. Residues Q112 and 158–159 (SL) each bind L-glutamine. Residues H197 and E199 each act as for GATase activity in the active site. The indole-3-glycerol phosphate synthase stretch occupies residues 257-519 (ILEKIHAQRL…DPAAFARELL (263 aa)). Residues 536–759 (LVKVCGTRSL…KAFINAVKEL (224 aa)) form an N-(5'-phosphoribosyl)anthranilate isomerase region.

The enzyme catalyses N-(5-phospho-beta-D-ribosyl)anthranilate = 1-(2-carboxyphenylamino)-1-deoxy-D-ribulose 5-phosphate. It catalyses the reaction 1-(2-carboxyphenylamino)-1-deoxy-D-ribulose 5-phosphate + H(+) = (1S,2R)-1-C-(indol-3-yl)glycerol 3-phosphate + CO2 + H2O. It carries out the reaction chorismate + L-glutamine = anthranilate + pyruvate + L-glutamate + H(+). The protein operates within amino-acid biosynthesis; L-tryptophan biosynthesis; L-tryptophan from chorismate: step 1/5. It participates in amino-acid biosynthesis; L-tryptophan biosynthesis; L-tryptophan from chorismate: step 3/5. Its pathway is amino-acid biosynthesis; L-tryptophan biosynthesis; L-tryptophan from chorismate: step 4/5. Its function is as follows. Trifunctional enzyme bearing the Gln amidotransferase (GATase) domain of anthranilate synthase, indole-glycerolphosphate synthase, and phosphoribosylanthranilate isomerase activities. This chain is Multifunctional tryptophan biosynthesis protein (trp1), found in Schizosaccharomyces pombe (strain 972 / ATCC 24843) (Fission yeast).